The sequence spans 230 residues: Ubiquitin carboxyl-terminal hydrolase isozyme L3 (230 aa).

Residues R5–A229 form the UCH catalytic domain. The tract at residues P8–P13 is interaction with ubiquitin. C95 serves as the catalytic Nucleophile. At S130 the chain carries Phosphoserine. The tract at residues A152–A159 is interaction with ubiquitin. Crossover loop which restricts access of large ubiquitin adducts to the active site. H169 (proton donor) is an active-site residue. Residues E219–A224 are interaction with ubiquitin.

This sequence belongs to the peptidase C12 family. As to quaternary structure, preferentially binds diubiquitin; the interaction does not hydrolyze diubiquitin but, in vitro, inhibits the hydrolyzing activity on other substrates. As to expression, highly expressed in heart, skeletal muscle, and testis.

The protein resides in the cytoplasm. The catalysed reaction is Thiol-dependent hydrolysis of ester, thioester, amide, peptide and isopeptide bonds formed by the C-terminal Gly of ubiquitin (a 76-residue protein attached to proteins as an intracellular targeting signal).. Inhibited by monoubiquitin and diubiquitin. In terms of biological role, deubiquitinating enzyme (DUB) that controls levels of cellular ubiquitin through processing of ubiquitin precursors and ubiquitinated proteins. Thiol protease that recognizes and hydrolyzes a peptide bond at the C-terminal glycine of either ubiquitin or NEDD8. Has a 10-fold preference for Arg and Lys at position P3'', and exhibits a preference towards 'Lys-48'-linked ubiquitin chains. Deubiquitinates ENAC in apical compartments, thereby regulating apical membrane recycling. Indirectly increases the phosphorylation of IGFIR, AKT and FOXO1 and promotes insulin-signaling and insulin-induced adipogenesis. Required for stress-response retinal, skeletal muscle and germ cell maintenance. May be involved in working memory. Can hydrolyze UBB(+1), a mutated form of ubiquitin which is not effectively degraded by the proteasome and is associated with neurogenerative disorders. The polypeptide is Ubiquitin carboxyl-terminal hydrolase isozyme L3 (UCHL3) (Homo sapiens (Human)).